Here is a 166-residue protein sequence, read N- to C-terminus: Ureidoglycolate lyase (166 aa).

This sequence belongs to the ureidoglycolate lyase family. In terms of assembly, homodimer. It depends on Ni(2+) as a cofactor.

The enzyme catalyses (S)-ureidoglycolate = urea + glyoxylate. The protein operates within nitrogen metabolism; (S)-allantoin degradation. In terms of biological role, catalyzes the catabolism of the allantoin degradation intermediate (S)-ureidoglycolate, generating urea and glyoxylate. Involved in the utilization of allantoin as nitrogen source. The polypeptide is Ureidoglycolate lyase (Rhizobium leguminosarum bv. trifolii (strain WSM2304)).